The chain runs to 37 residues: Cytochrome b6-f complex subunit 5 (37 aa).

A helical membrane pass occupies residues 5-25 (LLSGIILGLIPITICGLFFTA).

Belongs to the PetG family. In terms of assembly, the 4 large subunits of the cytochrome b6-f complex are cytochrome b6, subunit IV (17 kDa polypeptide, PetD), cytochrome f and the Rieske protein, while the 4 small subunits are PetG, PetL, PetM and PetN. The complex functions as a dimer.

It localises to the plastid. It is found in the chloroplast thylakoid membrane. Component of the cytochrome b6-f complex, which mediates electron transfer between photosystem II (PSII) and photosystem I (PSI), cyclic electron flow around PSI, and state transitions. PetG is required for either the stability or assembly of the cytochrome b6-f complex. The chain is Cytochrome b6-f complex subunit 5 from Euglena gracilis.